The sequence spans 281 residues: NADPH-dependent 7-cyano-7-deazaguanine reductase (281 aa).

Substrate is bound at residue 88-90 (IES). 90-91 (SK) lines the NADPH pocket. The active-site Thioimide intermediate is C189. D196 (proton donor) is an active-site residue. 228–229 (HE) contributes to the substrate binding site. 257–258 (RG) contributes to the NADPH binding site.

It belongs to the GTP cyclohydrolase I family. QueF type 2 subfamily. As to quaternary structure, homodimer.

It localises to the cytoplasm. The catalysed reaction is 7-aminomethyl-7-carbaguanine + 2 NADP(+) = 7-cyano-7-deazaguanine + 2 NADPH + 3 H(+). It participates in tRNA modification; tRNA-queuosine biosynthesis. In terms of biological role, catalyzes the NADPH-dependent reduction of 7-cyano-7-deazaguanine (preQ0) to 7-aminomethyl-7-deazaguanine (preQ1). This chain is NADPH-dependent 7-cyano-7-deazaguanine reductase, found in Proteus mirabilis (strain HI4320).